Consider the following 173-residue polypeptide: MDIAIQHPWFKRTLGPFYPSRLFDQFFGEGLFEYDLLPFLSSTISPYYRQSLFRSVLDSGVSEVRSDRDKFVIFLDVKHFSPEDLTVKVQEDFVEIHGKHNERQDDHGYISREFHRRYRLPSNVDQTALSCSLSADGMLTFSGPKIPSGMDAGHSERAIPVSREEKPSSAPSS.

An N-acetylmethionine modification is found at Met1. Residues 1–63 are required for complex formation with BFSP1 and BFSP2; it reads MDIAIQHPWF…RSVLDSGVSE (63 aa). Gln6 bears the Deamidated glutamine; partial mark. Phosphoserine is present on Ser45. Deamidated glutamine; partial is present on Gln50. A sHSP domain is found at 52 to 162; the sequence is LFRSVLDSGV…GHSERAIPVS (111 aa). N6-acetyllysine is present on Lys70. Deamidated glutamine; partial is present on Gln90. N6-acetyllysine is present on Lys99. His100 contacts Zn(2+). Deamidated asparagine; partial is present on Asn101. Positions 102 and 107 each coordinate Zn(2+). Residue Ser122 is modified to Phosphoserine. The residue at position 123 (Asn123) is a Deamidated asparagine; partial. Residues 144–173 are disordered; sequence PKIPSGMDAGHSERAIPVSREEKPSSAPSS. Basic and acidic residues predominate over residues 153–167; that stretch reads GHSERAIPVSREEKP. Residue His154 participates in Zn(2+) binding. A glycan (O-linked (GlcNAc) serine) is linked at Ser162.

This sequence belongs to the small heat shock protein (HSP20) family. As to quaternary structure, heteromer composed of three CRYAA and one CRYAB subunits. Inter-subunit bridging via zinc ions enhances stability, which is crucial as there is no protein turn over in the lens. Can also form homodimers and homotetramers (dimers of dimers) which serve as the building blocks of homooligomers. Within homooligomers, the zinc-binding motif is created from residues of 3 different molecules. His-100 and Glu-102 from one molecule are ligands of the zinc ion, and His-107 and His-154 residues from additional molecules complete the site with tetrahedral coordination geometry. Part of a complex required for lens intermediate filament formation composed of BFSP1, BFSP2 and CRYAA. Post-translationally, acetylation at Lys-70 may increase chaperone activity. In terms of processing, undergoes age-dependent proteolytical cleavage at the C-terminus.

The protein resides in the cytoplasm. It localises to the nucleus. Its function is as follows. Contributes to the transparency and refractive index of the lens. Acts as a chaperone, preventing aggregation of various proteins under a wide range of stress conditions. Required for the correct formation of lens intermediate filaments as part of a complex composed of BFSP1, BFSP2 and CRYAA. This chain is Alpha-crystallin A chain (CRYAA), found in Ceratotherium simum (White rhinoceros).